The sequence spans 244 residues: Small ribosomal subunit protein eS4 (244 aa).

The S4 RNA-binding domain occupies 43-106 (LPLLLVVRDV…DENYLVLFDE (64 aa)).

This sequence belongs to the eukaryotic ribosomal protein eS4 family.

The sequence is that of Small ribosomal subunit protein eS4 from Methanococcus maripaludis (strain C7 / ATCC BAA-1331).